A 227-amino-acid polypeptide reads, in one-letter code: Lipoprotein-releasing system ATP-binding protein LolD (227 aa).

The region spanning 7 to 227 (LQLTGVERHY…TISDGKIVDF (221 aa)) is the ABC transporter domain. Position 43–50 (43–50 (APSGTGKS)) interacts with ATP.

It belongs to the ABC transporter superfamily. Lipoprotein translocase (TC 3.A.1.125) family. The complex is composed of two ATP-binding proteins (LolD) and two transmembrane proteins (LolC and LolE).

Its subcellular location is the cell inner membrane. In terms of biological role, part of the ABC transporter complex LolCDE involved in the translocation of mature outer membrane-directed lipoproteins, from the inner membrane to the periplasmic chaperone, LolA. Responsible for the formation of the LolA-lipoprotein complex in an ATP-dependent manner. In Rhizobium johnstonii (strain DSM 114642 / LMG 32736 / 3841) (Rhizobium leguminosarum bv. viciae), this protein is Lipoprotein-releasing system ATP-binding protein LolD.